The sequence spans 180 residues: NADH-quinone oxidoreductase subunit I (180 aa).

2 consecutive 4Fe-4S ferredoxin-type domains span residues 44 to 74 and 90 to 119; these read LNRY…VEGA and RVYQ…MTTE. [4Fe-4S] cluster-binding residues include C54, C57, C60, C64, C99, C102, C105, and C109. A disordered region spans residues 145–180; sequence MQAPPHDMAPGKTDDDYYLGNVTPITPVPSGTEDAR.

Belongs to the complex I 23 kDa subunit family. NDH-1 is composed of 14 different subunits. Subunits NuoA, H, J, K, L, M, N constitute the membrane sector of the complex. It depends on [4Fe-4S] cluster as a cofactor.

It is found in the cell membrane. It catalyses the reaction a quinone + NADH + 5 H(+)(in) = a quinol + NAD(+) + 4 H(+)(out). Its function is as follows. NDH-1 shuttles electrons from NADH, via FMN and iron-sulfur (Fe-S) centers, to quinones in the respiratory chain. The immediate electron acceptor for the enzyme in this species is believed to be menaquinone. Couples the redox reaction to proton translocation (for every two electrons transferred, four hydrogen ions are translocated across the cytoplasmic membrane), and thus conserves the redox energy in a proton gradient. The chain is NADH-quinone oxidoreductase subunit I from Mycolicibacterium smegmatis (strain ATCC 700084 / mc(2)155) (Mycobacterium smegmatis).